A 190-amino-acid chain; its full sequence is Probable GTP-binding protein EngB (190 aa).

One can recognise an EngB-type G domain in the interval 22 to 190 (VKREVAFAGR…LNELLKILIP (169 aa)). Residues 30–37 (GRSNVGKS), 56–60 (GKTRS), 74–77 (DLPG), 141–144 (TKTD), and 173–175 (FSA) contribute to the GTP site. Mg(2+) is bound by residues S37 and T58.

It belongs to the TRAFAC class TrmE-Era-EngA-EngB-Septin-like GTPase superfamily. EngB GTPase family. Requires Mg(2+) as cofactor.

Functionally, necessary for normal cell division and for the maintenance of normal septation. The chain is Probable GTP-binding protein EngB from Kosmotoga olearia (strain ATCC BAA-1733 / DSM 21960 / TBF 19.5.1).